The sequence spans 239 residues: Protein-S-isoprenylcysteine O-methyltransferase (239 aa).

The Cytoplasmic segment spans residues 1 to 23 (MHQDFQEDEHEYPDIRRNPLHEV). Residues 24–44 (TMTSYILGILLGIFVGLFPQI) form a helical membrane-spanning segment. Over 45–47 (RFK) the chain is Lumenal. Residues 48-68 (NFNLFIIALSLFHFLEYYITA) traverse the membrane as a helical segment. Over 69–88 (KYNPLKVHSESFLLNNGKSY) the chain is Cytoplasmic. Residues 89–109 (MAAHSFAILECLVESFLFPDL) traverse the membrane as a helical segment. Residue Lys110 is a topological domain, lumenal. A helical membrane pass occupies residues 111–131 (IFSYSLATKLCTVLGCLLVIL). The Cytoplasmic portion of the chain corresponds to 132-175 (GQYTRTIAMHTAGHSFSHIVKTKKESDHVLVKTGVYSWSRHPSY). S-adenosyl-L-methionine contacts are provided by residues 159–162 (HVLV), Tyr167, and 172–175 (HPSY). The helical intramembrane region spans 176-206 (LGFFWWAIGTQLLLLNPLSLVIFIFVLWKFF). At 207–239 (SDRIRVEEKYLIEFFSAEYIEYKNKVGVGIPFI) the chain is on the cytoplasmic side. A substrate-binding site is contributed by Arg209. S-adenosyl-L-methionine is bound at residue Glu213.

This sequence belongs to the class VI-like SAM-binding methyltransferase superfamily. Isoprenylcysteine carboxyl methyltransferase family.

It is found in the endoplasmic reticulum membrane. The enzyme catalyses [protein]-C-terminal S-[(2E,6E)-farnesyl]-L-cysteine + S-adenosyl-L-methionine = [protein]-C-terminal S-[(2E,6E)-farnesyl]-L-cysteine methyl ester + S-adenosyl-L-homocysteine. In terms of biological role, mediates C-terminal methylation of the isoprenylated C-terminal cysteine in A-factor mating pheromone and Ras proteins. Does not have a preference for the farnesyl or geranylgeranyl moieties in the model substrates N-acetyl-S-farnesyl-L-cysteine (AFC) and N-acetyl-S-geranylgeranyl-L-cysteine (AGGC) in vitro. The protein is Protein-S-isoprenylcysteine O-methyltransferase (STE14) of Saccharomyces cerevisiae (strain ATCC 204508 / S288c) (Baker's yeast).